Here is a 477-residue protein sequence, read N- to C-terminus: UDP-N-acetylmuramate--L-alanine ligase (477 aa).

117 to 123 contributes to the ATP binding site; sequence GTHGKTT.

The protein belongs to the MurCDEF family.

It is found in the cytoplasm. The enzyme catalyses UDP-N-acetyl-alpha-D-muramate + L-alanine + ATP = UDP-N-acetyl-alpha-D-muramoyl-L-alanine + ADP + phosphate + H(+). It functions in the pathway cell wall biogenesis; peptidoglycan biosynthesis. Cell wall formation. This is UDP-N-acetylmuramate--L-alanine ligase from Phenylobacterium zucineum (strain HLK1).